Reading from the N-terminus, the 842-residue chain is Glucans biosynthesis glucosyltransferase H (842 aa).

Helical transmembrane passes span 140–160 (ILLL…KTIL), 194–214 (ILIL…TALM), 513–533 (VFLT…FLAL), 570–590 (LFAS…MLIW), 615–635 (VLLA…AFLG), 656–676 (FMRH…MAWL), and 680–700 (FLFW…VSVV).

This sequence belongs to the glycosyltransferase 2 family. OpgH subfamily.

The protein resides in the cell inner membrane. It participates in glycan metabolism; osmoregulated periplasmic glucan (OPG) biosynthesis. Functionally, involved in the biosynthesis of osmoregulated periplasmic glucans (OPGs). In Citrobacter koseri (strain ATCC BAA-895 / CDC 4225-83 / SGSC4696), this protein is Glucans biosynthesis glucosyltransferase H.